A 57-amino-acid chain; its full sequence is Large ribosomal subunit protein bL32 (57 aa).

Residues 1–16 are compositionally biased toward basic residues; sequence MAVQKSRKTPSRRGMR. The segment at 1-37 is disordered; it reads MAVQKSRKTPSRRGMRRSHDALSTTAITVDETTGELH. Residues 21-31 show a composition bias toward polar residues; sequence ALSTTAITVDE.

This sequence belongs to the bacterial ribosomal protein bL32 family.

This Hydrogenovibrio crunogenus (strain DSM 25203 / XCL-2) (Thiomicrospira crunogena) protein is Large ribosomal subunit protein bL32.